Reading from the N-terminus, the 40-residue chain is 67 kDa serum albumin (40 aa).

The 40-residue stretch at 1 to 40 folds into the Albumin domain; the sequence is DAEHKSEIVHRFNDLKEEKFKGAALITFAQFLHKKPEEEA. His4 provides a ligand contact to Cu cation.

It belongs to the ALB/AFP/VDB family. Plasma.

It is found in the secreted. In terms of biological role, serum albumin, the main protein of plasma, has a good binding capacity for water, Ca(2+), Na(+), K(+), fatty acids, hormones, bilirubin and drugs. Its main function is the regulation of the colloidal osmotic pressure of blood. The sequence is that of 67 kDa serum albumin from Trachemys scripta (Red-eared slider turtle).